We begin with the raw amino-acid sequence, 326 residues long: Beta-ketoacyl-[acyl-carrier-protein] synthase III (326 aa).

Residues cysteine 112 and histidine 251 contribute to the active site. The tract at residues 252 to 256 is ACP-binding; sequence QANSR. The active site involves asparagine 281.

This sequence belongs to the thiolase-like superfamily. FabH family. Homodimer.

It is found in the cytoplasm. It catalyses the reaction malonyl-[ACP] + acetyl-CoA + H(+) = 3-oxobutanoyl-[ACP] + CO2 + CoA. It participates in lipid metabolism; fatty acid biosynthesis. In terms of biological role, catalyzes the condensation reaction of fatty acid synthesis by the addition to an acyl acceptor of two carbons from malonyl-ACP. Catalyzes the first condensation reaction which initiates fatty acid synthesis and may therefore play a role in governing the total rate of fatty acid production. Possesses both acetoacetyl-ACP synthase and acetyl transacylase activities. Its substrate specificity determines the biosynthesis of branched-chain and/or straight-chain of fatty acids. This chain is Beta-ketoacyl-[acyl-carrier-protein] synthase III, found in Clostridium botulinum (strain Langeland / NCTC 10281 / Type F).